Reading from the N-terminus, the 756-residue chain is Glutathione biosynthesis bifunctional protein GshAB (756 aa).

The segment at 1–338 (MNYRELMQKK…TGDIFNEQVA (338 aa)) is glutamate--cysteine ligase. Residues 493-751 (KKILSAAGFH…LTMDVLKLLY (259 aa)) form the ATP-grasp domain. 520 to 578 (LRYANKAFVVKPKSTNYGLGITIFKEGASLEDFTEALRIAFKEDTAVLIEEFLPGTEYR) provides a ligand contact to ATP. 3 residues coordinate Mg(2+): aspartate 700, glutamate 721, and asparagine 723. Residues aspartate 700, glutamate 721, and asparagine 723 each coordinate Mn(2+).

In the N-terminal section; belongs to the glutamate--cysteine ligase type 1 family. Type 2 subfamily. As to quaternary structure, monomer. It depends on Mg(2+) as a cofactor. Mn(2+) serves as cofactor.

It carries out the reaction L-cysteine + L-glutamate + ATP = gamma-L-glutamyl-L-cysteine + ADP + phosphate + H(+). The catalysed reaction is gamma-L-glutamyl-L-cysteine + glycine + ATP = glutathione + ADP + phosphate + H(+). It participates in sulfur metabolism; glutathione biosynthesis; glutathione from L-cysteine and L-glutamate: step 1/2. It functions in the pathway sulfur metabolism; glutathione biosynthesis; glutathione from L-cysteine and L-glutamate: step 2/2. In terms of biological role, synthesizes glutathione from L-glutamate and L-cysteine via gamma-L-glutamyl-L-cysteine. The chain is Glutathione biosynthesis bifunctional protein GshAB from Enterococcus faecalis (strain ATCC 700802 / V583).